The primary structure comprises 426 residues: 3-phosphoshikimate 1-carboxyvinyltransferase (426 aa).

Residues K21, S22, and R26 each contribute to the 3-phosphoshikimate site. Residue K21 coordinates phosphoenolpyruvate. Phosphoenolpyruvate contacts are provided by G92 and R122. 3-phosphoshikimate contacts are provided by S167, S168, Q169, S195, D315, and K342. Q169 contributes to the phosphoenolpyruvate binding site. D315 acts as the Proton acceptor in catalysis. 2 residues coordinate phosphoenolpyruvate: R346 and R386.

This sequence belongs to the EPSP synthase family. As to quaternary structure, monomer.

It localises to the cytoplasm. The enzyme catalyses 3-phosphoshikimate + phosphoenolpyruvate = 5-O-(1-carboxyvinyl)-3-phosphoshikimate + phosphate. It functions in the pathway metabolic intermediate biosynthesis; chorismate biosynthesis. Functionally, catalyzes the transfer of the enolpyruvyl moiety of phosphoenolpyruvate (PEP) to the 5-hydroxyl of shikimate-3-phosphate (S3P) to produce enolpyruvyl shikimate-3-phosphate and inorganic phosphate. This is 3-phosphoshikimate 1-carboxyvinyltransferase from Methanosphaera stadtmanae (strain ATCC 43021 / DSM 3091 / JCM 11832 / MCB-3).